We begin with the raw amino-acid sequence, 980 residues long: Vacuolar protein sorting-associated protein 11 homolog (980 aa).

Residues 407–554 form a CHCR repeat; the sequence is YKETIGMLEP…GRDLLIHARD (148 aa). Residues 803–843 form an RING-type; atypical zinc finger; the sequence is CSACDTPLQLPTVHFLCKHAYHVHCFESYNMDGSDKCPACQ. Positions 886–898 are enriched in basic and acidic residues; that stretch reads TKKTKKSEAKKDP. A disordered region spans residues 886–980; sequence TKKTKKSEAK…APAPSTNPFD (95 aa). 2 stretches are compositionally biased toward polar residues: residues 917–937 and 947–960; these read TTIS…SRQR and TNPF…TRLS.

This sequence belongs to the VPS11 family. In terms of assembly, probable core component of at least two putative endosomal tethering complexes, the homotypic fusion and vacuole protein sorting (HOPS) complex and the class C core vacuole/endosome tethering (CORVET) complex. Their common core is composed of the class C Vps proteins vps-11, vps-16 and vps-18, which in HOPS further associates with vps-33.1, vps-39 and vps-41 and in CORVET with vps-8 and vps-33.2.

It is found in the late endosome membrane. The protein resides in the lysosome membrane. Functionally, plays a role in vesicle-mediated protein trafficking to lysosomal compartments including the endocytic membrane transport pathways. Believed to act as a core component of the putative HOPS and CORVET endosomal tethering complexes which are proposed to be involved in the rab-5-to-rab-7 endosome conversion probably implicating sand-1, and via binding SNAREs and SNARE complexes to mediate tethering and docking events during SNARE-mediated membrane fusion. The HOPS complex is proposed to be recruited to Rab7 on the late endosomal membrane and to regulate late endocytic, phagocytic and autophagic traffic towards lysosomes. Within the HOPS complex, contributes to the normal development of gut granules in embryonic and adult intestinal cells. The CORVET complex is proposed to function as a Rab5 effector to mediate early endosome fusion probably in specific endosome subpopulations. Required for fusion of endosomes and autophagosomes with lysosomes. Involved in cargo transport from early to late endosomes and required for the transition from early to late endosomes. Possibly has a role in clearance of apoptotic cells during programmed cell death. This chain is Vacuolar protein sorting-associated protein 11 homolog, found in Caenorhabditis elegans.